The following is a 351-amino-acid chain: Phosphate acyltransferase (351 aa).

Belongs to the PlsX family. As to quaternary structure, homodimer. Probably interacts with PlsY.

The protein resides in the cytoplasm. It catalyses the reaction a fatty acyl-[ACP] + phosphate = an acyl phosphate + holo-[ACP]. The protein operates within lipid metabolism; phospholipid metabolism. Its function is as follows. Catalyzes the reversible formation of acyl-phosphate (acyl-PO(4)) from acyl-[acyl-carrier-protein] (acyl-ACP). This enzyme utilizes acyl-ACP as fatty acyl donor, but not acyl-CoA. This chain is Phosphate acyltransferase, found in Gloeothece citriformis (strain PCC 7424) (Cyanothece sp. (strain PCC 7424)).